Here is a 371-residue protein sequence, read N- to C-terminus: uncharacterized protein (371 aa).

This is an uncharacterized protein from Rickettsia prowazekii (strain Madrid E).